A 503-amino-acid polypeptide reads, in one-letter code: Cytosol aminopeptidase (503 aa).

Mn(2+) is bound by residues lysine 269 and aspartate 274. The active site involves lysine 281. The Mn(2+) site is built by aspartate 292, aspartate 351, and glutamate 353. Residue arginine 355 is part of the active site.

It belongs to the peptidase M17 family. Requires Mn(2+) as cofactor.

It localises to the cytoplasm. The catalysed reaction is Release of an N-terminal amino acid, Xaa-|-Yaa-, in which Xaa is preferably Leu, but may be other amino acids including Pro although not Arg or Lys, and Yaa may be Pro. Amino acid amides and methyl esters are also readily hydrolyzed, but rates on arylamides are exceedingly low.. It carries out the reaction Release of an N-terminal amino acid, preferentially leucine, but not glutamic or aspartic acids.. In terms of biological role, presumably involved in the processing and regular turnover of intracellular proteins. Catalyzes the removal of unsubstituted N-terminal amino acids from various peptides. This is Cytosol aminopeptidase from Vibrio cholerae serotype O1 (strain ATCC 39541 / Classical Ogawa 395 / O395).